Consider the following 108-residue polypeptide: MLYPIFIFILAGLCEIGGGYLIWLWLREGQSSLVGLIGGVILMLYGVIATFQSFPSFGRVYAAYGGVFIIMSLIFAMVVDKQMPDKYDVIGAIICIVGVLVMLLPSRA.

Helical transmembrane passes span 5–25 (IFIFILAGLCEIGGGYLIWLW), 31–51 (SSLVGLIGGVILMLYGVIATF), 60–80 (VYAAYGGVFIIMSLIFAMVVD), and 86–106 (KYDVIGAIICIVGVLVMLLPS).

It belongs to the UPF0060 family.

It localises to the cell membrane. The polypeptide is UPF0060 membrane protein SAR2425 (Staphylococcus aureus (strain MRSA252)).